The following is a 554-amino-acid chain: Hydroxylamine reductase (554 aa).

Residues C3, C6, C18, and C25 each coordinate [2Fe-2S] cluster. Hybrid [4Fe-2O-2S] cluster contacts are provided by H252, E276, C320, C408, C436, C461, E495, and K497. C408 is subject to Cysteine persulfide.

Belongs to the HCP family. It depends on [2Fe-2S] cluster as a cofactor. Hybrid [4Fe-2O-2S] cluster serves as cofactor.

The protein localises to the cytoplasm. It catalyses the reaction A + NH4(+) + H2O = hydroxylamine + AH2 + H(+). Functionally, catalyzes the reduction of hydroxylamine to form NH(3) and H(2)O. The protein is Hydroxylamine reductase of Shewanella baltica (strain OS155 / ATCC BAA-1091).